Consider the following 304-residue polypeptide: UDP-3-O-acyl-N-acetylglucosamine deacetylase (304 aa).

Zn(2+) is bound by residues histidine 78, histidine 237, and aspartate 241. Histidine 264 functions as the Proton donor in the catalytic mechanism.

Belongs to the LpxC family. Requires Zn(2+) as cofactor.

The catalysed reaction is a UDP-3-O-[(3R)-3-hydroxyacyl]-N-acetyl-alpha-D-glucosamine + H2O = a UDP-3-O-[(3R)-3-hydroxyacyl]-alpha-D-glucosamine + acetate. It participates in glycolipid biosynthesis; lipid IV(A) biosynthesis; lipid IV(A) from (3R)-3-hydroxytetradecanoyl-[acyl-carrier-protein] and UDP-N-acetyl-alpha-D-glucosamine: step 2/6. Functionally, catalyzes the hydrolysis of UDP-3-O-myristoyl-N-acetylglucosamine to form UDP-3-O-myristoylglucosamine and acetate, the committed step in lipid A biosynthesis. The protein is UDP-3-O-acyl-N-acetylglucosamine deacetylase of Acidithiobacillus ferrooxidans (strain ATCC 53993 / BNL-5-31) (Leptospirillum ferrooxidans (ATCC 53993)).